The primary structure comprises 369 residues: Anhydro-N-acetylmuramic acid kinase (369 aa).

Residue 12-19 participates in ATP binding; that stretch reads GTSMDGVD.

It belongs to the anhydro-N-acetylmuramic acid kinase family.

It carries out the reaction 1,6-anhydro-N-acetyl-beta-muramate + ATP + H2O = N-acetyl-D-muramate 6-phosphate + ADP + H(+). It participates in amino-sugar metabolism; 1,6-anhydro-N-acetylmuramate degradation. The protein operates within cell wall biogenesis; peptidoglycan recycling. Functionally, catalyzes the specific phosphorylation of 1,6-anhydro-N-acetylmuramic acid (anhMurNAc) with the simultaneous cleavage of the 1,6-anhydro ring, generating MurNAc-6-P. Is required for the utilization of anhMurNAc either imported from the medium or derived from its own cell wall murein, and thus plays a role in cell wall recycling. The polypeptide is Anhydro-N-acetylmuramic acid kinase (Shewanella sp. (strain W3-18-1)).